The sequence spans 414 residues: Histidine--tRNA ligase (414 aa).

It belongs to the class-II aminoacyl-tRNA synthetase family. In terms of assembly, homodimer.

The protein localises to the cytoplasm. It carries out the reaction tRNA(His) + L-histidine + ATP = L-histidyl-tRNA(His) + AMP + diphosphate + H(+). This is Histidine--tRNA ligase from Pelobacter propionicus (strain DSM 2379 / NBRC 103807 / OttBd1).